Reading from the N-terminus, the 102-residue chain is Small ribosomal subunit protein uS10 (102 aa).

The protein belongs to the universal ribosomal protein uS10 family. Part of the 30S ribosomal subunit.

Involved in the binding of tRNA to the ribosomes. This is Small ribosomal subunit protein uS10 from Agrobacterium fabrum (strain C58 / ATCC 33970) (Agrobacterium tumefaciens (strain C58)).